The chain runs to 489 residues: UDP-N-acetylmuramoyl-L-alanyl-D-glutamate--2,6-diaminopimelate ligase (489 aa).

Position 32 (S32) interacts with UDP-N-acetyl-alpha-D-muramoyl-L-alanyl-D-glutamate. Position 113 to 119 (113 to 119 (GTNGKTT)) interacts with ATP. Residues 154–155 (TT), S181, Q187, and R189 each bind UDP-N-acetyl-alpha-D-muramoyl-L-alanyl-D-glutamate. K221 is subject to N6-carboxylysine. Meso-2,6-diaminopimelate is bound by residues R381, 405-408 (DNPR), G456, and E460. A Meso-diaminopimelate recognition motif motif is present at residues 405–408 (DNPR).

It belongs to the MurCDEF family. MurE subfamily. Mg(2+) serves as cofactor. Carboxylation is probably crucial for Mg(2+) binding and, consequently, for the gamma-phosphate positioning of ATP.

It is found in the cytoplasm. It catalyses the reaction UDP-N-acetyl-alpha-D-muramoyl-L-alanyl-D-glutamate + meso-2,6-diaminopimelate + ATP = UDP-N-acetyl-alpha-D-muramoyl-L-alanyl-gamma-D-glutamyl-meso-2,6-diaminopimelate + ADP + phosphate + H(+). It functions in the pathway cell wall biogenesis; peptidoglycan biosynthesis. Its function is as follows. Catalyzes the addition of meso-diaminopimelic acid to the nucleotide precursor UDP-N-acetylmuramoyl-L-alanyl-D-glutamate (UMAG) in the biosynthesis of bacterial cell-wall peptidoglycan. The chain is UDP-N-acetylmuramoyl-L-alanyl-D-glutamate--2,6-diaminopimelate ligase from Gloeobacter violaceus (strain ATCC 29082 / PCC 7421).